The following is a 227-amino-acid chain: 2,3-bisphosphoglycerate-dependent phosphoglycerate mutase (227 aa).

Residues 7–14 (RHGQSEWN), 20–21 (TG), Arg59, 86–89 (ERHY), Lys97, 113–114 (RR), and 182–183 (GN) contribute to the substrate site. His8 functions as the Tele-phosphohistidine intermediate in the catalytic mechanism. The Proton donor/acceptor role is filled by Glu86.

It belongs to the phosphoglycerate mutase family. BPG-dependent PGAM subfamily. In terms of assembly, homodimer.

The enzyme catalyses (2R)-2-phosphoglycerate = (2R)-3-phosphoglycerate. Its pathway is carbohydrate degradation; glycolysis; pyruvate from D-glyceraldehyde 3-phosphate: step 3/5. Catalyzes the interconversion of 2-phosphoglycerate and 3-phosphoglycerate. The chain is 2,3-bisphosphoglycerate-dependent phosphoglycerate mutase from Neisseria gonorrhoeae (strain ATCC 700825 / FA 1090).